A 412-amino-acid chain; its full sequence is CinA-like protein (412 aa).

It belongs to the CinA family.

The chain is CinA-like protein from Kosmotoga olearia (strain ATCC BAA-1733 / DSM 21960 / TBF 19.5.1).